Here is a 121-residue protein sequence, read N- to C-terminus: MPKHAKSARLLRVEGTIQREISEILVKEVSDPRLKDVTITGIDMTPDFSIAYVYWTIYSDLASSGEKADAGLQAAKGLIKRQLARKMTTFKIPDLIFKRDTAIEYGDHIEQLIAKLNHESK.

Belongs to the RbfA family. In terms of assembly, monomer. Binds 30S ribosomal subunits, but not 50S ribosomal subunits or 70S ribosomes.

It is found in the cytoplasm. One of several proteins that assist in the late maturation steps of the functional core of the 30S ribosomal subunit. Associates with free 30S ribosomal subunits (but not with 30S subunits that are part of 70S ribosomes or polysomes). Required for efficient processing of 16S rRNA. May interact with the 5'-terminal helix region of 16S rRNA. This Oenococcus oeni (strain ATCC BAA-331 / PSU-1) protein is Ribosome-binding factor A.